Consider the following 417-residue polypeptide: Phosphoglycerate kinase (417 aa).

(2R)-3-phosphoglycerate is bound by residues valine 23, aspartate 24, phenylalanine 25, asparagine 26, glutamine 39, arginine 40, serine 63, histidine 64, glycine 66, arginine 67, leucine 122, arginine 123, histidine 170, and arginine 171. ADP is bound at residue glycine 214. Glycine 214 lines the CDP pocket. Positions 215 and 216 each coordinate AMP. Alanine 215 contacts ATP. Residue alanine 215 coordinates Mg(2+). CDP is bound at residue aspartate 219. Residue aspartate 219 participates in Mg(2+) binding. Lysine 220 contributes to the AMP binding site. Position 220 (lysine 220) interacts with ATP. Residue glycine 238 participates in ADP binding. Glycine 238 contacts CDP. Residues glycine 239 and glycine 313 each coordinate AMP. Residues glycine 239 and glycine 313 each coordinate ATP. The CDP site is built by glycine 338 and phenylalanine 343. Phenylalanine 343 contacts ADP. AMP is bound at residue glutamate 344. ATP contacts are provided by glutamate 344, aspartate 375, and threonine 376. Residue aspartate 375 participates in Mg(2+) binding.

This sequence belongs to the phosphoglycerate kinase family. Monomer. It depends on Mg(2+) as a cofactor.

It localises to the cytoplasm. Its subcellular location is the mitochondrion. It carries out the reaction (2R)-3-phosphoglycerate + ATP = (2R)-3-phospho-glyceroyl phosphate + ADP. It functions in the pathway carbohydrate degradation; glycolysis; pyruvate from D-glyceraldehyde 3-phosphate: step 2/5. Catalyzes one of the two ATP producing reactions in the glycolytic pathway via the reversible conversion of 1,3-diphosphoglycerate to 3-phosphoglycerate. Both L- and D- forms of purine and pyrimidine nucleotides can be used as substrates, but the activity is much lower on pyrimidines. Negatively regulates the biosynthesis of acetyl-CoA from pyruvate in the mitochondrion. The polypeptide is Phosphoglycerate kinase (PGKA) (Penicillium citrinum).